The primary structure comprises 707 residues: MSKNDKKNKQSGSSNMDQLKSEDILQAVVLGDSFDRKFAPITLEKPRTLLPLVNIPLLDYTLEFLAASGVQQIFVFCCAHASQIKEYIQSSRWHDLPGVQVICMTGSNCRTTGDALRGVYDAQVIQSDFILISGDVVSNMNLQKALQIHKDRRELDKNNIMTMVYKQASSTHRTRSKQDDTVIWCNRDTMQVVCYDNSPSKKKSSISVELFQKHPSIQMRYDLIDCHIDICSPEVLALFNDNFDFADIRKDFIHDILTSDLLDYKLSAYVLQGEYAARVKDLRTYHSVSKDIIHRWTFPMVPDNNFMCNSSYSLSRQMIYKEKNVKLLGDCLISDETVIGTQTEIGAGSIVSHSTIGRNCIIGKNVKINGSYIWDDVTIQDNAIIDHSIICNGSIIKSSSIIGRGSIIGFNVYIGQSKTLEPFSKITMAQYNEDEDDEELLEEYFKEINLNDDNNNNNNNNNENNKTNRWLMENELYNELVPRINDSIHDDIESDESGDEGDKSGGKIKNNKNNDDNPIEPDSVKFHREVGDTIRRGIIEKLPLENIQLEINGLKFAYDRDGLDCLTSILPVLLESSSSSSSTTDSVTPKELQQFIAGRISAFSPLLVKFSSEDSMVDLIFKIQDFCDENEKFKVVFQPILHQLYENDVISEEAIFEWAEEIEGDEEDDGFYLKKCKGFIDWLKSAEEESDDSDDSDDDDDDSDESD.

2 disordered regions span residues 489–526 (HDDI…SVKF) and 686–707 (AEEE…DESD). The 178-residue stretch at 516-693 (DNPIEPDSVK…KSAEEESDDS (178 aa)) folds into the W2 domain. A compositionally biased stretch (acidic residues) spans 688–707 (EESDDSDDSDDDDDDSDESD).

The protein belongs to the eIF-2B gamma/epsilon subunits family. Component of the translation initiation factor 2B (eIF2B) complex which is a heterodecamer of two sets of five different subunits: alpha, beta, gamma, delta and epsilon. Subunits alpha, beta and delta comprise a regulatory subcomplex and subunits epsilon and gamma comprise a catalytic subcomplex. Within the complex, the hexameric regulatory complex resides at the center, with the two heterodimeric catalytic subcomplexes bound on opposite sides.

It localises to the cytoplasm. The protein resides in the cytosol. Acts as a component of the translation initiation factor 2B (eIF2B) complex, which catalyzes the exchange of GDP for GTP on eukaryotic initiation factor 2 (eIF2) gamma subunit. Its guanine nucleotide exchange factor activity is repressed when bound to eIF2 complex phosphorylated on the alpha subunit, thereby limiting the amount of methionyl-initiator methionine tRNA available to the ribosome and consequently global translation is repressed. The sequence is that of Translation initiation factor eIF2B subunit epsilon (eif2b5) from Dictyostelium discoideum (Social amoeba).